The following is a 367-amino-acid chain: Pectate lyase 1 (367 aa).

The N-terminal stretch at Met-1–Ser-21 is a signal peptide. Disulfide bonds link Cys-28–Cys-45 and Cys-128–Cys-147. Asn-148 is a glycosylation site (N-linked (GlcNAc...) asparagine). Residue Asp-170 coordinates Ca(2+). N-linked (GlcNAc...) asparagine glycosylation occurs at Asn-178. The Ca(2+) site is built by Asp-194 and Asp-198. Arg-250 is an active-site residue. N-linked (GlcNAc...) asparagine glycosylation is present at Asn-293. A disulfide bond links Cys-306 and Cys-312.

This sequence belongs to the polysaccharide lyase 1 family. Amb a subfamily. Ca(2+) serves as cofactor.

It carries out the reaction Eliminative cleavage of (1-&gt;4)-alpha-D-galacturonan to give oligosaccharides with 4-deoxy-alpha-D-galact-4-enuronosyl groups at their non-reducing ends.. It functions in the pathway glycan metabolism; pectin degradation; 2-dehydro-3-deoxy-D-gluconate from pectin: step 2/5. Functionally, has pectate lyase activity. This Hesperocyparis arizonica (Arizona cypress) protein is Pectate lyase 1.